The following is a 290-amino-acid chain: Pirin (290 aa).

Residues H56, H58, H101, and E103 each coordinate Fe cation.

The protein belongs to the pirin family. May interact with NF1/CTF1. Interacts with BCL3. Identified in a complex comprised of PIR, BLC3, NFKB1 and target DNA. Fe cation is required as a cofactor. Weakly expressed in bone marrow.

The protein localises to the nucleus. Its subcellular location is the cytoplasm. The catalysed reaction is quercetin + O2 = 2-(3,4-dihydroxybenzoyloxy)-4,6-dihydroxybenzoate + CO. Its pathway is flavonoid metabolism; quercetin degradation. Functionally, transcriptional coregulator of NF-kappa-B which facilitates binding of NF-kappa-B proteins to target kappa-B genes in a redox-state-dependent manner. May be required for efficient terminal myeloid maturation of hematopoietic cells. Has quercetin 2,3-dioxygenase activity (in vitro). This chain is Pirin (Pir), found in Mus musculus (Mouse).